A 377-amino-acid polypeptide reads, in one-letter code: MTTAAIIVAAGRGTRAGGGVPKQWRPLAGRRVADWTLDRFALRQITHVVLVLHPEDHDAWDEFATTPLILAPGGSDRAGSVRNGLAALDGLGITKVLIHDVARPCVSAATIGAVLDALDAHPGAAPGLAVTDALWTGAEGLVTGTRERDGLFAAQTPQGFRYDAIVAAHAAHPGGAADDVEVARAAELTVAIVPGDPDNLKITRAEDFARAERILRQDMDVRLGNGYDVHRFGPGDHVILCGIKVPHDRGLQGHSDADVGMHAVTDALYGALVEGDIGRHFPPSDPQWKGAASEIFLRHAVDLVRARGFAVSNIDCTLVCEYPKIGPHALEMQAEMARIMGLEASRVSVKATTSERLGFTGRSEGIAALATACLVKP.

The 2-C-methyl-D-erythritol 4-phosphate cytidylyltransferase stretch occupies residues 1–221 (MTTAAIIVAA…ERILRQDMDV (221 aa)). Residues 222 to 377 (RLGNGYDVHR…ALATACLVKP (156 aa)) form a 2-C-methyl-D-erythritol 2,4-cyclodiphosphate synthase region. Residues Asp228 and His230 each contribute to the a divalent metal cation site. 4-CDP-2-C-methyl-D-erythritol 2-phosphate-binding positions include 228-230 (DVH) and 254-255 (HS). His262 contributes to the a divalent metal cation binding site. 4-CDP-2-C-methyl-D-erythritol 2-phosphate-binding positions include 276 to 278 (DIG), 352 to 355 (TTSE), Phe359, and Arg362.

The protein in the N-terminal section; belongs to the IspD/TarI cytidylyltransferase family. IspD subfamily. In the C-terminal section; belongs to the IspF family. The cofactor is a divalent metal cation.

The enzyme catalyses 2-C-methyl-D-erythritol 4-phosphate + CTP + H(+) = 4-CDP-2-C-methyl-D-erythritol + diphosphate. The catalysed reaction is 4-CDP-2-C-methyl-D-erythritol 2-phosphate = 2-C-methyl-D-erythritol 2,4-cyclic diphosphate + CMP. Its pathway is isoprenoid biosynthesis; isopentenyl diphosphate biosynthesis via DXP pathway; isopentenyl diphosphate from 1-deoxy-D-xylulose 5-phosphate: step 2/6. It participates in isoprenoid biosynthesis; isopentenyl diphosphate biosynthesis via DXP pathway; isopentenyl diphosphate from 1-deoxy-D-xylulose 5-phosphate: step 4/6. Bifunctional enzyme that catalyzes the formation of 4-diphosphocytidyl-2-C-methyl-D-erythritol from CTP and 2-C-methyl-D-erythritol 4-phosphate (MEP) (IspD), and catalyzes the conversion of 4-diphosphocytidyl-2-C-methyl-D-erythritol 2-phosphate (CDP-ME2P) to 2-C-methyl-D-erythritol 2,4-cyclodiphosphate (ME-CPP) with a corresponding release of cytidine 5-monophosphate (CMP) (IspF). The sequence is that of Bifunctional enzyme IspD/IspF from Ruegeria pomeroyi (strain ATCC 700808 / DSM 15171 / DSS-3) (Silicibacter pomeroyi).